Consider the following 462-residue polypeptide: Ubiquitin carboxyl-terminal hydrolase calypso (462 aa).

In terms of domain architecture, UCH catalytic spans G29–P260. Residue C115 is the Nucleophile of the active site. Catalysis depends on H197, which acts as the Proton donor. The region spanning N357–P385 is the ULD domain. The interval K387 to K462 is positively charged C-terminal tail required for binding nucleosomes. Positions G413–T447 are enriched in low complexity. A disordered region spans residues G413–K462. The segment covering P448–K462 has biased composition (basic residues).

Belongs to the peptidase C12 family. BAP1 subfamily. As to quaternary structure, catalytic component of the polycomb repressive deubiquitinase (PR-DUB) complex, at least composed of caly/calypso, Asx and sba (MBD5/6 homolog). The PR-DUB complex associates with nucleosomes to mediate deubiquitination of histone H2AK118ub1 substrates; the association requires the positively charged C-terminal tail of caly, probably due to direct binding of DNA. Interacts (via ULD domain) with Asx (via DEUBAD domain); the interaction produces a stable heterodimer with a composite binding site for ubiquitin. Homodimerizes (via coiled-coil hinge-region between the UCH and ULD domains) to mediate assembly of 2 copies of the caly-Asx heterodimer into a bisymmetric tetramer; dimerization enhances PR-DUB association with nucleosomes.

The protein resides in the nucleus. It catalyses the reaction Thiol-dependent hydrolysis of ester, thioester, amide, peptide and isopeptide bonds formed by the C-terminal Gly of ubiquitin (a 76-residue protein attached to proteins as an intracellular targeting signal).. Its function is as follows. Catalytic component of the polycomb repressive deubiquitinase (PR-DUB) complex, a complex that specifically mediates deubiquitination of histone H2A monoubiquitinated at 'Lys-119' (H2AK118ub1). Mediates bisymmetric organization of the PR-DUB complex and is involved in association with nucleosomes to mediate deubiquitination. Does not deubiquitinate monoubiquitinated histone H2B. Required to maintain the transcriptionally repressive state of homeotic genes throughout development. The PR-DUB complex has weak or no activity toward 'Lys-48'- and 'Lys-63'-linked polyubiquitin chains. Polycomb group (PcG) protein. The chain is Ubiquitin carboxyl-terminal hydrolase calypso from Drosophila grimshawi (Hawaiian fruit fly).